The sequence spans 196 residues: uncharacterized protein (196 aa).

This sequence to H.influenzae HI_0431.

This is an uncharacterized protein from Salmonella typhi.